The primary structure comprises 343 residues: L-threonine 3-dehydrogenase (343 aa).

Residue cysteine 40 participates in Zn(2+) binding. Active-site charge relay system residues include threonine 42 and histidine 45. Zn(2+) is bound by residues histidine 65, glutamate 66, cysteine 95, cysteine 98, cysteine 101, and cysteine 109. Residues isoleucine 177, aspartate 197, arginine 202, 264 to 266 (LGI), and 288 to 289 (IY) contribute to the NAD(+) site.

It belongs to the zinc-containing alcohol dehydrogenase family. In terms of assembly, homotetramer. Requires Zn(2+) as cofactor.

The protein localises to the cytoplasm. It catalyses the reaction L-threonine + NAD(+) = (2S)-2-amino-3-oxobutanoate + NADH + H(+). It participates in amino-acid degradation; L-threonine degradation via oxydo-reductase pathway; glycine from L-threonine: step 1/2. In terms of biological role, catalyzes the NAD(+)-dependent oxidation of L-threonine to 2-amino-3-ketobutyrate. This is L-threonine 3-dehydrogenase from Vibrio atlanticus (strain LGP32) (Vibrio splendidus (strain Mel32)).